Here is a 426-residue protein sequence, read N- to C-terminus: GTPase Obg (426 aa).

Residues 1-158 (MFVDQVSVYV…RNIKVELKLI (158 aa)) form the Obg domain. Disordered regions lie at residues 66–86 (GKRG…DPLV) and 119–146 (GGRG…GEPG). Positions 159 to 329 (ADVGLVGFPS…LLFAIADKLE (171 aa)) constitute an OBG-type G domain. GTP is bound by residues 165 to 172 (GFPSVGKS), 190 to 194 (FTTLS), 212 to 215 (DLPG), 282 to 285 (NKMD), and 310 to 312 (SAL). Mg(2+) contacts are provided by Ser-172 and Thr-192. In terms of domain architecture, OCT spans 348–426 (RYQKEEDPFH…LLEYEFEFIE (79 aa)).

Belongs to the TRAFAC class OBG-HflX-like GTPase superfamily. OBG GTPase family. In terms of assembly, monomer. It depends on Mg(2+) as a cofactor.

Its subcellular location is the cytoplasm. An essential GTPase which binds GTP, GDP and possibly (p)ppGpp with moderate affinity, with high nucleotide exchange rates and a fairly low GTP hydrolysis rate. Plays a role in control of the cell cycle, stress response, ribosome biogenesis and in those bacteria that undergo differentiation, in morphogenesis control. The chain is GTPase Obg from Oceanobacillus iheyensis (strain DSM 14371 / CIP 107618 / JCM 11309 / KCTC 3954 / HTE831).